The following is a 246-amino-acid chain: tRNA (guanine-N(1)-)-methyltransferase (246 aa).

S-adenosyl-L-methionine is bound by residues Gly-113 and 133–138 (IGDYVL).

Belongs to the RNA methyltransferase TrmD family. In terms of assembly, homodimer.

Its subcellular location is the cytoplasm. The enzyme catalyses guanosine(37) in tRNA + S-adenosyl-L-methionine = N(1)-methylguanosine(37) in tRNA + S-adenosyl-L-homocysteine + H(+). Functionally, specifically methylates guanosine-37 in various tRNAs. This Yersinia pseudotuberculosis serotype O:1b (strain IP 31758) protein is tRNA (guanine-N(1)-)-methyltransferase.